Reading from the N-terminus, the 424-residue chain is CinA-like protein (424 aa).

The protein belongs to the CinA family.

The polypeptide is CinA-like protein (Prochlorococcus marinus (strain MIT 9215)).